The following is a 426-amino-acid chain: Ornithine aminotransferase (426 aa).

K291 is subject to N6-(pyridoxal phosphate)lysine.

This sequence belongs to the class-III pyridoxal-phosphate-dependent aminotransferase family. Requires pyridoxal 5'-phosphate as cofactor.

It carries out the reaction a 2-oxocarboxylate + L-ornithine = L-glutamate 5-semialdehyde + an L-alpha-amino acid. It functions in the pathway amino-acid biosynthesis; L-proline biosynthesis; L-glutamate 5-semialdehyde from L-ornithine: step 1/1. The chain is Ornithine aminotransferase from Vigna aconitifolia (Moth bean).